The sequence spans 802 residues: Copper-exporting P-type ATPase (802 aa).

HMA domains follow at residues 5 to 70 (KKTT…YGVA) and 72 to 138 (ETVE…YDAS). Cu(+)-binding residues include cysteine 16, cysteine 19, cysteine 83, and cysteine 86. The next 6 membrane-spanning stretches (helical) occupy residues 161-181 (LIISAVLSLPLLMLMFVHLFN), 192-212 (WFQFILATPVQFIIGWQFYVG), 224-244 (MDVLVAVGTSAAYFYSIYEMI), 256-276 (LYFETSAVLITLILFGKYLEA), 411-431 (YFVPIVVGIALLTFIVWITLV), and 438-458 (PALVASISVLVIACPCALGLA). Aspartate 495 (4-aspartylphosphate intermediate) is an active-site residue. Positions 690 and 694 each coordinate Mg(2+). Helical transmembrane passes span 748–767 (LFWAFGYNIAGIPIAALGLL) and 771–790 (VAGAAMALSSVSVVTNALRL).

The protein belongs to the cation transport ATPase (P-type) (TC 3.A.3) family. Type IB subfamily.

Its subcellular location is the cell membrane. It carries out the reaction Cu(+)(in) + ATP + H2O = Cu(+)(out) + ADP + phosphate + H(+). Involved in copper export. This is Copper-exporting P-type ATPase (copA) from Staphylococcus aureus (strain bovine RF122 / ET3-1).